Here is a 325-residue protein sequence, read N- to C-terminus: Phenylalanine--tRNA ligase alpha subunit (325 aa).

Glu-251 contributes to the Mg(2+) binding site.

It belongs to the class-II aminoacyl-tRNA synthetase family. Phe-tRNA synthetase alpha subunit type 1 subfamily. Tetramer of two alpha and two beta subunits. The cofactor is Mg(2+).

It localises to the cytoplasm. The enzyme catalyses tRNA(Phe) + L-phenylalanine + ATP = L-phenylalanyl-tRNA(Phe) + AMP + diphosphate + H(+). The chain is Phenylalanine--tRNA ligase alpha subunit from Thermotoga petrophila (strain ATCC BAA-488 / DSM 13995 / JCM 10881 / RKU-1).